The following is a 680-amino-acid chain: Serine/threonine-protein kinase YPK1 (680 aa).

Positions 1 to 11 (MYSWKSKFKFG) are enriched in basic residues. Residues 1–117 (MYSWKSKFKF…GTPNDATSSS (117 aa)) form a disordered region. Composition is skewed to basic and acidic residues over residues 12–21 (KSKEEKEAKH) and 41–56 (GEHDASITRSSLDRKG). T57 carries the phosphothreonine modification. Over residues 59-71 (NPSNSSVVPVRVS) the composition is skewed to low complexity. A phosphoserine mark is found at S61, S64, and S71. Residues 73–83 (DASSSTSTVRD) show a composition bias toward polar residues. Over residues 84 to 97 (SNGGNSENTNSSQN) the composition is skewed to low complexity. The span at 98-117 (LDETANIGSTGTPNDATSSS) shows a compositional bias: polar residues. S170 is modified (phosphoserine). In terms of domain architecture, Protein kinase spans 347 to 602 (FDLLKVIGKG…ADEIRNHPFF (256 aa)). ATP-binding positions include 353-361 (IGKGSFGKV) and K376. D470 (proton acceptor) is an active-site residue. T502 bears the Phosphothreonine mark. Residue T504 is modified to Phosphothreonine; by PKH1. The AGC-kinase C-terminal domain occupies 603 to 673 (SQLSWKRLLM…VGNEQLGSSM (71 aa)). Residues S644 and S653 each carry the phosphoserine modification. A Phosphothreonine; by PKH1 modification is found at T662. Residue S671 is modified to Phosphoserine.

This sequence belongs to the protein kinase superfamily. AGC Ser/Thr protein kinase family. RAC subfamily. In terms of processing, autophosphorylated. Phytosphingosine level stimulates phosphorylation by PKH1. The N-terminal half is phosphorylated by FPK1. Phosphorylation is inhibited by exogenous addition of phytosphingosine.

It localises to the cytoplasm. Its subcellular location is the cell membrane. It carries out the reaction L-seryl-[protein] + ATP = O-phospho-L-seryl-[protein] + ADP + H(+). The enzyme catalyses L-threonyl-[protein] + ATP = O-phospho-L-threonyl-[protein] + ADP + H(+). Activated by phytosphingosine (PHS), a sphingoid long chain base. Activated by PKH1 phosphorylation. Plays an essential role in the proliferation of yeast cells. Involved in a signaling pathway, required for optimal cell wall integrity, that acts in parallel with the PKC1-SLT2-dependent pathway. Downstream kinase in the sphingolipid-mediated signaling pathway. Phosphorylation is regulated by the intracellular sphingolipid concentration. Disruption or inhibition of sphingolipid synthesis leads to the activation and phosphorylation of YPK1 through the TORC2 and PKH1 pathways, which in turn phosphorylates ORM1 and LAG1 to activate sphingolipid synthesis. Cooperates with SLI1 in mediating resistance to the sphingolipid biosynthesis inhibitor drug myriocin (ISP-1); kinase activity is essential for the resistance. Required for both receptor-mediated and fluid-phase endocytosis, but is not necessary for receptor phosphorylation or ubiquitination. Necessary for the internalization of plasma membrane proteins carrying different types of internalization signals. Acts downstream of the PKH kinases to control endocytosis by phosphorylating components of the endocytic machinery. Phosphorylation of residue Thr-504 in the activation loop and residue Thr-662 are essential for activity. Phosphorylates and down-regulates flippase activator FPK1. This Saccharomyces cerevisiae (strain ATCC 204508 / S288c) (Baker's yeast) protein is Serine/threonine-protein kinase YPK1 (YPK1).